We begin with the raw amino-acid sequence, 200 residues long: Holliday junction branch migration complex subunit RuvA (200 aa).

Residues 1-63 (MFEYLTGLIT…EDAITLFGFA (63 aa)) form a domain I region. The domain II stretch occupies residues 64-142 (TQAEKRLFTQ…AVQDEVQLDF (79 aa)). Positions 143–151 (TAPGPLGPS) are flexible linker. The tract at residues 151-200 (SAALQDALAALESLGYTTKQVERVQKQLEGLQGELSTNDYLSQGLKLLSR) is domain III.

It belongs to the RuvA family. As to quaternary structure, homotetramer. Forms an RuvA(8)-RuvB(12)-Holliday junction (HJ) complex. HJ DNA is sandwiched between 2 RuvA tetramers; dsDNA enters through RuvA and exits via RuvB. An RuvB hexamer assembles on each DNA strand where it exits the tetramer. Each RuvB hexamer is contacted by two RuvA subunits (via domain III) on 2 adjacent RuvB subunits; this complex drives branch migration. In the full resolvosome a probable DNA-RuvA(4)-RuvB(12)-RuvC(2) complex forms which resolves the HJ.

The protein localises to the cytoplasm. Functionally, the RuvA-RuvB-RuvC complex processes Holliday junction (HJ) DNA during genetic recombination and DNA repair, while the RuvA-RuvB complex plays an important role in the rescue of blocked DNA replication forks via replication fork reversal (RFR). RuvA specifically binds to HJ cruciform DNA, conferring on it an open structure. The RuvB hexamer acts as an ATP-dependent pump, pulling dsDNA into and through the RuvAB complex. HJ branch migration allows RuvC to scan DNA until it finds its consensus sequence, where it cleaves and resolves the cruciform DNA. This chain is Holliday junction branch migration complex subunit RuvA, found in Limosilactobacillus fermentum (strain NBRC 3956 / LMG 18251) (Lactobacillus fermentum).